Here is a 78-residue protein sequence, read N- to C-terminus: Acyl carrier protein (78 aa).

One can recognise a Carrier domain in the interval 2 to 77 (SDIADRVKKI…DAIKFLEKNS (76 aa)). S37 is modified (O-(pantetheine 4'-phosphoryl)serine).

It belongs to the acyl carrier protein (ACP) family. 4'-phosphopantetheine is transferred from CoA to a specific serine of apo-ACP by AcpS. This modification is essential for activity because fatty acids are bound in thioester linkage to the sulfhydryl of the prosthetic group.

Its subcellular location is the cytoplasm. Its pathway is lipid metabolism; fatty acid biosynthesis. Carrier of the growing fatty acid chain in fatty acid biosynthesis. The polypeptide is Acyl carrier protein (Methylobacterium sp. (strain 4-46)).